Here is a 792-residue protein sequence, read N- to C-terminus: Kinesin-like protein KIFC2 (792 aa).

Disordered regions lie at residues 22 to 45 and 142 to 184; these read AAAVSDPGDPTQKSGGQPRGRRRP and QGTQ…QEHQ. Positions 142–169 are enriched in polar residues; sequence QGTQPTCPVQPSTLDGSLSQEESSSQPT. Residues 186-347 adopt a coiled-coil conformation; sequence LQLEEEQRVW…ARMASLRQGC (162 aa). The region spanning 409-732 is the Kinesin motor domain; it reads NIRVLCRLRP…LKFAERVGQV (324 aa). 486–493 contacts ATP; sequence GQTGTGKT. Residues 734–792 are disordered; that stretch reads LGPARRRRAPRSGTPSSLSTDTPLTGTSCTPTPSPGSPPSTSPNSCSGLTLEPPGDPPP. Positions 744–764 are enriched in low complexity; it reads RSGTPSSLSTDTPLTGTSCTP. Positions 765-774 are enriched in pro residues; sequence TPSPGSPPST.

Belongs to the TRAFAC class myosin-kinesin ATPase superfamily. Kinesin family. In terms of tissue distribution, present in axons and dendrites of neurons in the central and peripheral nervous systems.

The protein resides in the cytoplasm. The protein localises to the cytoskeleton. In terms of biological role, may play a role in microtubule-dependent retrograde axonal transport. May function as the motor for the transport of multivesicular body (MVB)-like organelles in dendrites. This Mus musculus (Mouse) protein is Kinesin-like protein KIFC2 (Kifc2).